A 230-amino-acid chain; its full sequence is MPKHGKKYTEMSKKIDKQARYDFNEALELSLASSYVKFDETVDIAVRLGVDPRHADQMVRGTVALPNGLGKEVKVLVFAKGEKEKEALDAGADFIADEETVAKIKDGWFGFDKAIATPDMMGTVGKLGRVLGPRGLMPNAKTGTVTFDVAKAVEELKAGKIDFRVEKAGIIHVPVGKVSFGPEKLVENVKAFINMIIALKPASSKGTYLKTITVSTTMGPGVKIDPMFTK.

Belongs to the universal ribosomal protein uL1 family. In terms of assembly, part of the 50S ribosomal subunit.

Binds directly to 23S rRNA. The L1 stalk is quite mobile in the ribosome, and is involved in E site tRNA release. Functionally, protein L1 is also a translational repressor protein, it controls the translation of the L11 operon by binding to its mRNA. This chain is Large ribosomal subunit protein uL1, found in Desulforapulum autotrophicum (strain ATCC 43914 / DSM 3382 / VKM B-1955 / HRM2) (Desulfobacterium autotrophicum).